The chain runs to 520 residues: Type I restriction enzyme EcoprrI methylase subunit (520 aa).

Residues 198–203 (EFFTPQ), 230–232 (SGS), and glutamate 254 contribute to the S-adenosyl-L-methionine site.

It belongs to the N(4)/N(6)-methyltransferase family. In terms of assembly, the type I restriction/modification system is composed of three polypeptides R, M and S; the restriction enzyme has stoichiometry R(2)M(2)S(1) while the methyltransferase is M(2)S(1).

The enzyme catalyses a 2'-deoxyadenosine in DNA + S-adenosyl-L-methionine = an N(6)-methyl-2'-deoxyadenosine in DNA + S-adenosyl-L-homocysteine + H(+). Its function is as follows. The subtype gamma methyltransferase (M) subunit of a type I restriction enzyme. The M and S subunits together form a methyltransferase (MTase) that methylates two adenine residues of the sequence 5'-CCAN(7)ATGC-3'. In the presence of the R subunit the complex can also act as an endonuclease, binding to the same target sequence but cutting the DNA some distance from this site. Whether the DNA is cut or modified depends on the methylation state of the target sequence. When the target site is unmodified, the DNA is cut. When the target site is hemimethylated, the complex acts as a maintenance MTase modifying the DNA so that both strands become methylated. After locating a non-methylated recognition site, the enzyme complex serves as a molecular motor that translocates DNA in an ATP-dependent manner until a collision occurs that triggers cleavage. This chain is Type I restriction enzyme EcoprrI methylase subunit, found in Escherichia coli.